The following is a 224-amino-acid chain: MAQPLVAAPSSSSITSPIPRKLCSSLLTPSSLSLSSNPRNSLQFLNSKLFLSPPSTSHRRLSIVAMAPKPGKAKKVIGVIKLALEAGKATPAPPVGPALGSKGVNIMAFCKDYNARTADKPGFVIPVEITVFDDKSFTFILKTPPASVLLLKASGAEKGSKDPQMEKVGKITIDQLRGIATEKLPDLNCTTIESAMRIIAGTAANMGIDIDPPILVKKKKEVIF.

The transit peptide at 1–66 directs the protein to the chloroplast; it reads MAQPLVAAPS…SHRRLSIVAM (66 aa). Lysine 75 and lysine 111 each carry N6,N6,N6-trimethyllysine.

In terms of assembly, component of the chloroplast large ribosomal subunit (LSU). Mature 70S chloroplast ribosomes of higher plants consist of a small (30S) and a large (50S) subunit. The 30S small subunit contains 1 molecule of ribosomal RNA (16S rRNA) and 24 different proteins. The 50S large subunit contains 3 rRNA molecules (23S, 5S and 4.5S rRNA) and 33 different proteins.

It is found in the plastid. It localises to the chloroplast. Functionally, component of the chloroplast ribosome (chloro-ribosome), a dedicated translation machinery responsible for the synthesis of chloroplast genome-encoded proteins, including proteins of the transcription and translation machinery and components of the photosynthetic apparatus. In Spinacia oleracea (Spinach), this protein is Large ribosomal subunit protein uL11c (rpl11).